The chain runs to 165 residues: Endoribonuclease YbeY (165 aa).

Residues His126, His130, and His136 each coordinate Zn(2+).

This sequence belongs to the endoribonuclease YbeY family. Zn(2+) is required as a cofactor.

Its subcellular location is the cytoplasm. Its function is as follows. Single strand-specific metallo-endoribonuclease involved in late-stage 70S ribosome quality control and in maturation of the 3' terminus of the 16S rRNA. In Ruegeria pomeroyi (strain ATCC 700808 / DSM 15171 / DSS-3) (Silicibacter pomeroyi), this protein is Endoribonuclease YbeY.